Here is a 445-residue protein sequence, read N- to C-terminus: MASELINRRHETDQPTADAYYPKPIKPWFTVTRPMRYMLREQRLIFVLVGIAIATLVFTIFPRSTQSTPYSDPFSGYGIRPDESYVPAIQAQRKPSLEYLNRIGATGGKIPLGLKRKGLRVVVTGGAGFVGSHLVDRLMARGDTVIVVDNFFTGRKENVMHHFSNPNFEMIRHDVVEPILLEVDQIYHLACPASPVHYKFNPVKTIKTNVVGTLNMLGLAKRVGARFLLTSTSEVYGDPLQHPQVETYWGNVNPIGVRSCYDEGKRTAETLTMDYHRGANVEVRIARIFNTYGPRMCIDDGRVVSNFVAQALRKEPLTVYGDGKQTRSFQFVSDLVEGLMRLMEGEHVGPFNLGNPGEFTMLELAKVVQETIDPNANIEFRPNTEDDPHKRKPDITKAKELLGWEPKVSLRQGLPLMVKDFRQRVFGDQKEGSSAAATTTKTTSA.

N-acetylalanine is present on A2. The Cytoplasmic segment spans residues 2–43 (ASELINRRHETDQPTADAYYPKPIKPWFTVTRPMRYMLREQR). A helical; Signal-anchor for type II membrane protein transmembrane segment spans residues 44 to 64 (LIFVLVGIAIATLVFTIFPRS). Topologically, residues 65 to 445 (TQSTPYSDPF…AATTTKTTSA (381 aa)) are lumenal. 149–174 (DNFFTGRKENVMHHFSNPNFEMIRHD) serves as a coordination point for NAD(+). Substrate is bound at residue R258. Y261 (proton acceptor) is an active-site residue. Position 261-265 (261-265 (YDEGK)) interacts with NAD(+). N290 is a substrate binding site. An NAD(+)-binding site is contributed by R302. Residues 303-307 (VVSNF), 320-327 (YGDGKQTR), and 387-391 (DPHKR) each bind substrate.

The protein belongs to the NAD(P)-dependent epimerase/dehydratase family. UDP-glucuronic acid decarboxylase subfamily. Homodimer. Requires NAD(+) as cofactor. In terms of tissue distribution, ubiquitous.

The protein localises to the golgi apparatus. Its subcellular location is the golgi stack membrane. The enzyme catalyses UDP-alpha-D-glucuronate + H(+) = UDP-alpha-D-xylose + CO2. Its pathway is nucleotide-sugar biosynthesis; UDP-alpha-D-xylose biosynthesis; UDP-alpha-D-xylose from UDP-alpha-D-glucuronate: step 1/1. Catalyzes the NAD-dependent decarboxylation of UDP-glucuronic acid to UDP-xylose. Necessary for the biosynthesis of the core tetrasaccharide in glycosaminoglycan biosynthesis. The chain is UDP-glucuronic acid decarboxylase 2 (UXS2) from Arabidopsis thaliana (Mouse-ear cress).